The following is a 963-amino-acid chain: Phosphoenolpyruvate carboxylase 2 (963 aa).

At serine 11 the chain carries Phosphoserine. Catalysis depends on residues histidine 172 and lysine 599. Serine 701 carries the phosphoserine modification.

The protein belongs to the PEPCase type 1 family. In terms of assembly, homotetramer. The cofactor is Mg(2+). Expressed in all plant organs, with higher levels in stems and leaves.

The protein resides in the cytoplasm. The enzyme catalyses oxaloacetate + phosphate = phosphoenolpyruvate + hydrogencarbonate. With respect to regulation, by light-reversible phosphorylation. Through the carboxylation of phosphoenolpyruvate (PEP) it forms oxaloacetate, a four-carbon dicarboxylic acid source for the tricarboxylic acid cycle. The protein is Phosphoenolpyruvate carboxylase 2 (PPC2) of Arabidopsis thaliana (Mouse-ear cress).